Here is a 737-residue protein sequence, read N- to C-terminus: Protein kinase C epsilon type (737 aa).

The 117-residue stretch at 1 to 117 folds into the C2 domain; that stretch reads MVVFNGLLKI…NGSRHFEDWI (117 aa). Ser-62 bears the Phosphoserine mark. A Phorbol-ester/DAG-type 1 zinc finger spans residues 169–220; that stretch reads GHKFMATYLRQPTYCSHCRDFIWGVIGKQGYQCQVCTCVVHKRCHELIITKC. The short motif at 223-228 is the Interaction with actin element; that stretch reads LKKQET. The residue at position 228 (Thr-228) is a Phosphothreonine. Ser-234 is modified (phosphoserine). The Phorbol-ester/DAG-type 2 zinc-finger motif lies at 242 to 292; the sequence is PHKFGIHNYKVPTFCDHCGSLLWGLLRQGLQCKVCKMNVHRRCETNVAPNC. Position 309 is a phosphothreonine (Thr-309). The segment at 310–356 is disordered; the sequence is PDKITNSGQRRKKLAAGAESPQPASGNSPSEDDRSKSAPTSPCDQEL. Phosphoserine is present on residues Ser-316, Ser-329, Ser-337, and Ser-346. The residue at position 349 (Thr-349) is a Phosphothreonine. Ser-350 is subject to Phosphoserine; by MAPK11 and MAPK14. Phosphoserine is present on residues Ser-368 and Ser-388. Residues 369–398 are disordered; the sequence is FDNRGEEHRASSSTDGQLASPGENGEVRQG. Residues 408–668 form the Protein kinase domain; it reads FNFIKVLGKG…EDAIKQHPFF (261 aa). ATP contacts are provided by residues 414 to 422 and Lys-437; that span reads LGKGSFGKV. Asp-532 acts as the Proton acceptor in catalysis. A Phosphothreonine; by PDPK1 modification is found at Thr-566. The AGC-kinase C-terminal domain occupies 669–737; the sequence is KEIDWVLLEQ…FSYFGEDLMP (69 aa). A phosphothreonine mark is found at Thr-703 and Thr-710. Ser-729 is subject to Phosphoserine.

Belongs to the protein kinase superfamily. AGC Ser/Thr protein kinase family. PKC subfamily. In terms of assembly, forms a ternary complex with TRIM63 and RACK1/GN2BL1. Can form a complex with PDLIM5 and N-type calcium channel. Interacts with COPB1. Interacts with DGKQ. Interacts with STAT3. Interacts with YWHAB. Interacts with HSP90AB1; promotes functional activation in a heat shock-dependent manner. Interacts (via phorbol-ester/DAG-type 2 domain) with PRPH and VIM. Interacts with NLRP5/MATER. Phosphorylation on Thr-566 by PDPK1 triggers autophosphorylation on Ser-729. Phosphorylation in the hinge domain at Ser-350 by MAPK11 or MAPK14, Ser-346 by GSK3B and Ser-368 by autophosphorylation is required for interaction with YWHAB. In response to growth factors, phosphorylated at Thr-703 and Ser-729 by the mTORC2 complex, promoting autophosphorylation and activation of PRKCE.

It is found in the cytoplasm. It localises to the cytoskeleton. Its subcellular location is the cell membrane. The protein localises to the perinuclear region. The protein resides in the nucleus. It catalyses the reaction L-seryl-[protein] + ATP = O-phospho-L-seryl-[protein] + ADP + H(+). It carries out the reaction L-threonyl-[protein] + ATP = O-phospho-L-threonyl-[protein] + ADP + H(+). With respect to regulation, novel PKCs (PRKCD, PRKCE, PRKCH and PRKCQ) are calcium-insensitive, but activated by diacylglycerol (DAG) and phosphatidylserine. Three specific sites; Thr-566 (activation loop of the kinase domain), Thr-710 (turn motif) and Ser-729 (hydrophobic region), need to be phosphorylated for its full activation. Its function is as follows. Calcium-independent, phospholipid- and diacylglycerol (DAG)-dependent serine/threonine-protein kinase that plays essential roles in the regulation of multiple cellular processes linked to cytoskeletal proteins, such as cell adhesion, motility, migration and cell cycle, functions in neuron growth and ion channel regulation, and is involved in immune response, cancer cell invasion and regulation of apoptosis. Mediates cell adhesion to the extracellular matrix via integrin-dependent signaling, by mediating angiotensin-2-induced activation of integrin beta-1 (ITGB1) in cardiac fibroblasts. Phosphorylates MARCKS, which phosphorylates and activates PTK2/FAK, leading to the spread of cardiomyocytes. Involved in the control of the directional transport of ITGB1 in mesenchymal cells by phosphorylating vimentin (VIM), an intermediate filament (IF) protein. In epithelial cells, associates with and phosphorylates keratin-8 (KRT8), which induces targeting of desmoplakin at desmosomes and regulates cell-cell contact. Phosphorylates IQGAP1, which binds to CDC42, mediating epithelial cell-cell detachment prior to migration. During cytokinesis, forms a complex with YWHAB, which is crucial for daughter cell separation, and facilitates abscission by a mechanism which may implicate the regulation of RHOA. In cardiac myocytes, regulates myofilament function and excitation coupling at the Z-lines, where it is indirectly associated with F-actin via interaction with COPB1. During endothelin-induced cardiomyocyte hypertrophy, mediates activation of PTK2/FAK, which is critical for cardiomyocyte survival and regulation of sarcomere length. Plays a role in the pathogenesis of dilated cardiomyopathy via persistent phosphorylation of troponin I (TNNI3). Involved in nerve growth factor (NFG)-induced neurite outgrowth and neuron morphological change independently of its kinase activity, by inhibition of RHOA pathway, activation of CDC42 and cytoskeletal rearrangement. May be involved in presynaptic facilitation by mediating phorbol ester-induced synaptic potentiation. Phosphorylates gamma-aminobutyric acid receptor subunit gamma-2 (GABRG2), which reduces the response of GABA receptors to ethanol and benzodiazepines and may mediate acute tolerance to the intoxicating effects of ethanol. Upon PMA treatment, phosphorylates the capsaicin- and heat-activated cation channel TRPV1, which is required for bradykinin-induced sensitization of the heat response in nociceptive neurons. Is able to form a complex with PDLIM5 and N-type calcium channel, and may enhance channel activities and potentiates fast synaptic transmission by phosphorylating the pore-forming alpha subunit CACNA1B (CaV2.2). Downstream of TLR4, plays an important role in the lipopolysaccharide (LPS)-induced immune response by phosphorylating and activating TICAM2/TRAM, which in turn activates the transcription factor IRF3 and subsequent cytokines production. In differentiating erythroid progenitors, is regulated by EPO and controls the protection against the TNFSF10/TRAIL-mediated apoptosis, via BCL2. May be involved in the regulation of the insulin-induced phosphorylation and activation of AKT1. Phosphorylates NLRP5/MATER and may thereby modulate AKT pathway activation in cumulus cells. Phosphorylates and activates LRRK1, which phosphorylates RAB proteins involved in intracellular trafficking. This is Protein kinase C epsilon type (Prkce) from Rattus norvegicus (Rat).